The sequence spans 999 residues: Receptor-like protein kinase 5 (999 aa).

The first 14 residues, 1–14, serve as a signal peptide directing secretion; sequence MLYCLILLLCLSST. The Extracellular portion of the chain corresponds to 15–621; the sequence is YLPSLSLNQD…LCRKITRSKN (607 aa). 5 LRR repeats span residues 90–112, 115–137, 140–161, 164–186, and 188–208; these read SLHS…DFDT, NLIS…LPFN, NLKF…SFGE, KLES…LGNV, and TLKE…PSQL. Asn98 and Asn102 each carry an N-linked (GlcNAc...) asparagine glycan. 2 N-linked (GlcNAc...) asparagine glycosylation sites follow: Asn150 and Asn185. Residue Asn210 is glycosylated (N-linked (GlcNAc...) asparagine). 2 LRR repeats span residues 213 to 236 and 237 to 259; these read ELQV…SRLT and SLVN…ITQL. Residues Asn269 and Asn282 are each glycosylated (N-linked (GlcNAc...) asparagine). LRR repeat units follow at residues 285–307, 308–330, 332–353, 356–378, 380–402, 404–427, 428–450, 452–474, 500–523, 524–546, 548–569, and 571–593; these read TLKR…LNLL, NLES…ITRS, TLSE…QLGA, PLQY…VCGE, KLEY…LGKC, SLTR…WGLP, RLSL…IIGA, NLSN…IGSL, QLSR…RGWK, NLNE…VGIL, VLNY…ELQN, and KLNV…YANK. Asn452 is a glycosylation site (N-linked (GlcNAc...) asparagine). Asn576 carries N-linked (GlcNAc...) asparagine glycosylation. Residues 622–641 traverse the membrane as a helical segment; the sequence is IGYVWILLTIFLLAGLVFVV. Over 642–999 the chain is Cytoplasmic; it reads GIVMFIAKCR…PYYTEDLNSV (358 aa). Residues 683 to 968 enclose the Protein kinase domain; that stretch reads LDEKNVIGFG…KVVIMLQEVS (286 aa). ATP is bound by residues 689–697 and Lys711; that span reads IGFGSSGKV. Residues Tyr766 and Tyr806 each carry the phosphotyrosine modification. Asp819 acts as the Proton acceptor in catalysis. A Phosphoserine modification is found at Ser856. Tyr864 and Tyr871 each carry phosphotyrosine. Thr872 carries the post-translational modification Phosphothreonine. Residues 972–999 form a disordered region; that stretch reads PCSSPNTSKRSKTGGKLSPYYTEDLNSV.

This sequence belongs to the protein kinase superfamily. Ser/Thr protein kinase family. In terms of assembly, interacts with CST. Binds to IDA. It depends on Mg(2+) as a cofactor. Requires Mn(2+) as cofactor. Autophosphorylated on Ser, Thr and Tyr residues. As to expression, expressed in roots and rosettes. Expressed at the base of petioles and pedicels, and in the abscission zones of the floral organs.

Its subcellular location is the cell membrane. It carries out the reaction L-seryl-[protein] + ATP = O-phospho-L-seryl-[protein] + ADP + H(+). The enzyme catalyses L-threonyl-[protein] + ATP = O-phospho-L-threonyl-[protein] + ADP + H(+). The catalysed reaction is L-tyrosyl-[protein] + ATP = O-phospho-L-tyrosyl-[protein] + ADP + H(+). Receptor with a dual specificity kinase activity acting on both serine/threonine- and tyrosine-containing substrates that controls floral organ abscission. May interact with the 'INFLORESCENCE DEFICIENT IN ABSCISSION' (IDA) ligands family. The protein is Receptor-like protein kinase 5 (RLK5) of Arabidopsis thaliana (Mouse-ear cress).